Here is a 392-residue protein sequence, read N- to C-terminus: Histidinol-phosphate aminotransferase 2 (392 aa).

At lysine 228 the chain carries N6-(pyridoxal phosphate)lysine.

This sequence belongs to the class-II pyridoxal-phosphate-dependent aminotransferase family. Histidinol-phosphate aminotransferase subfamily. As to quaternary structure, homodimer. Requires pyridoxal 5'-phosphate as cofactor.

The enzyme catalyses L-histidinol phosphate + 2-oxoglutarate = 3-(imidazol-4-yl)-2-oxopropyl phosphate + L-glutamate. Its pathway is amino-acid biosynthesis; L-histidine biosynthesis; L-histidine from 5-phospho-alpha-D-ribose 1-diphosphate: step 7/9. The polypeptide is Histidinol-phosphate aminotransferase 2 (Nitrosospira multiformis (strain ATCC 25196 / NCIMB 11849 / C 71)).